We begin with the raw amino-acid sequence, 61 residues long: DNA-directed RNA polymerase subunit 12-like protein (61 aa).

Zn(2+) is bound by residues Cys-21, Cys-24, Cys-38, and Cys-41.

Belongs to the archaeal Rpo12/eukaryotic RPC10 RNA polymerase subunit family.

The protein resides in the nucleus. This is DNA-directed RNA polymerase subunit 12-like protein (NRPB12L) from Arabidopsis thaliana (Mouse-ear cress).